Reading from the N-terminus, the 464-residue chain is MPLHSKNAVRDDLLDDIYSSADLSLSMPKYKMPEQEHDPRHAYQVIHDELMMDGNSRQNLATFCQTWVEDEVHKLMDECIDKNMIDKDEYPQTAELESRCVHMLADLWNSPDAENTLGCSTTGSSEAAMLGGMALKWAWREKMKKLGKPTDKPNMICGPVQVCWHKFARYWDIELREIPMEGDRLIMTPEEVIKRCDENTIGVVPTLGVTFTCQYEPVKAVHEALDKLQEETGLDIPMHIDAASGGFLAPFCDPDLEWDFRLPRVKSINASGHKFGLSPLGVGWVIWRDASALHEDLIFNVNYLGGNMPTFALNFSRPGGQIVAQYYNFLRLGKEGYRKIHQACYDTAVYLSSEIEKLGMFEIIYDGKGGIPAMSWSLKEGVDPGFNLFDLSDRIRSRGWQIAAYAMPPKREDLVIMRILVRHGFSRDQADLLVADLKHCVEFFAKHPISHGSDELESSGFNHG.

Lys274 bears the N6-(pyridoxal phosphate)lysine mark.

The protein belongs to the group II decarboxylase family. It depends on pyridoxal 5'-phosphate as a cofactor.

It carries out the reaction L-glutamate + H(+) = 4-aminobutanoate + CO2. In terms of biological role, catalyzes the pyridoxal-dependent decarboxylation of glutamate to produce 4-aminobutanoate. Has weak activity with aspartate, but cannot complement an E.coli panD deletion mutant. The protein is Glutamate decarboxylase of Aliivibrio fischeri (strain ATCC 700601 / ES114) (Vibrio fischeri).